Here is a 715-residue protein sequence, read N- to C-terminus: Protein MTSS 2 (715 aa).

An IMD domain is found at 1–249 (METAEKECGA…EQVIKDLKGS (249 aa)). Residues 134–156 (HEIKKKSSDTLKLQKKARKGKGD) adopt a coiled-coil conformation. 3 stretches are compositionally biased toward low complexity: residues 253-274 (WSYQ…SMCS), 284-295 (SSVSSHDSGFVS), and 312-330 (TSQK…TCQS). 3 disordered regions span residues 253-405 (WSYQ…EVSP), 420-485 (LEHQ…RNSN), and 527-562 (IRRT…PTVP). At T257 the chain carries Phosphothreonine. S261 carries the phosphoserine modification. Positions 331–341 (VSECSSPTSDW) are enriched in polar residues. Basic and acidic residues predominate over residues 360–369 (DRVEHLRDTE). A Phosphoserine modification is found at S404. The span at 429–442 (SLQYSSGYSTQTTT) shows a compositional bias: low complexity. Positions 443–455 (PSCSEDTIPSQGS) are enriched in polar residues. Residues S542, S564, S575, S587, S597, and S602 each carry the phosphoserine modification. Phosphothreonine is present on T606. The segment at 661 to 690 (FPFPTALSATPSEETPTPPPAATSDPPAED) is disordered. In terms of domain architecture, WH2 spans 687–704 (PAEDMLVAIRRGVRLRRT).

It belongs to the MTSS family. In terms of assembly, interacts (via IMD domain) with RAC1; this interaction may be important to potentiate PDGF-induced RAC1 activation.

The protein localises to the cytoplasm. It is found in the cell projection. Its subcellular location is the ruffle. Involved in plasma membrane dynamics. Potentiated PDGF-mediated formation of membrane ruffles and lamellipodia in fibroblasts, acting via RAC1 activation. May function in actin bundling. The protein is Protein MTSS 2 (Mtss2) of Mus musculus (Mouse).